We begin with the raw amino-acid sequence, 465 residues long: tRNA-2-methylthio-N(6)-dimethylallyladenosine synthase (465 aa).

An MTTase N-terminal domain is found at 18 to 136 (RKLYIETYGC…LPNLVGAAEQ (119 aa)). Cys27, Cys63, Cys100, Cys174, Cys178, and Cys181 together coordinate [4Fe-4S] cluster. The Radical SAM core domain maps to 160–392 (GGVHINGFVS…IALQNRLSEE (233 aa)). Residues 395-458 (KRDISKTFEV…SATLFGEVVE (64 aa)) enclose the TRAM domain.

Belongs to the methylthiotransferase family. MiaB subfamily. In terms of assembly, monomer. [4Fe-4S] cluster serves as cofactor.

The protein localises to the cytoplasm. The catalysed reaction is N(6)-dimethylallyladenosine(37) in tRNA + (sulfur carrier)-SH + AH2 + 2 S-adenosyl-L-methionine = 2-methylsulfanyl-N(6)-dimethylallyladenosine(37) in tRNA + (sulfur carrier)-H + 5'-deoxyadenosine + L-methionine + A + S-adenosyl-L-homocysteine + 2 H(+). Functionally, catalyzes the methylthiolation of N6-(dimethylallyl)adenosine (i(6)A), leading to the formation of 2-methylthio-N6-(dimethylallyl)adenosine (ms(2)i(6)A) at position 37 in tRNAs that read codons beginning with uridine. This Porphyromonas gingivalis (strain ATCC 33277 / DSM 20709 / CIP 103683 / JCM 12257 / NCTC 11834 / 2561) protein is tRNA-2-methylthio-N(6)-dimethylallyladenosine synthase.